A 162-amino-acid chain; its full sequence is RxLR effector protein PITG_06094 (162 aa).

An N-terminal signal peptide occupies residues 1-20 (MRLSFILAATLTGLLACATA). The RxLR-dEER motif lies at 51–91 (RFLRAYNDAEDDSEDPKNVKNTVDAKPADESEDSELSEEER). A disordered region spans residues 56–88 (YNDAEDDSEDPKNVKNTVDAKPADESEDSELSE).

This sequence belongs to the RxLR effector family.

Its subcellular location is the secreted. It is found in the host cytoplasm. The protein localises to the host nucleus. It localises to the host nucleolus. Functionally, effector that enhances P.infestans colonization of Nicotiana benthamiana leaves. The polypeptide is RxLR effector protein PITG_06094 (Phytophthora infestans (strain T30-4) (Potato late blight agent)).